A 378-amino-acid polypeptide reads, in one-letter code: tRNA (guanine(26)-N(2))-dimethyltransferase (378 aa).

The Trm1 methyltransferase domain maps to 4–374 (KEVTEGKVRI…KGYEEIIRCV (371 aa)). S-adenosyl-L-methionine contacts are provided by Arg44, Arg69, Asp87, Asp114, and Ala115. Residues Cys246, Cys249, Cys263, and Cys266 each contribute to the Zn(2+) site.

Belongs to the class I-like SAM-binding methyltransferase superfamily. Trm1 family.

It carries out the reaction guanosine(26) in tRNA + 2 S-adenosyl-L-methionine = N(2)-dimethylguanosine(26) in tRNA + 2 S-adenosyl-L-homocysteine + 2 H(+). Dimethylates a single guanine residue at position 26 of a number of tRNAs using S-adenosyl-L-methionine as donor of the methyl groups. The chain is tRNA (guanine(26)-N(2))-dimethyltransferase from Saccharolobus islandicus (strain Y.G.57.14 / Yellowstone #1) (Sulfolobus islandicus).